A 1617-amino-acid chain; its full sequence is Mitogen-activated protein kinase kinae kinase bck1 (1617 aa).

Disordered regions lie at residues 1–73, 167–199, 211–253, 345–399, 455–555, 568–633, 739–820, 832–1144, and 1164–1277; these read MDGQ…SQLQ, GPVH…RTMP, SVAS…GGMS, RQIH…SPNL, DHRR…SSSY, KRSK…LRGK, GVPL…ISPE, EHKR…RGDI, and DIDL…EILR. Residues 19 to 28 show a composition bias toward low complexity; that stretch reads TQPSQSHMLS. A compositionally biased stretch (pro residues) spans 44–60; the sequence is VMPPPPPGPPPGPPPGP. Over residues 220–248 the composition is skewed to polar residues; it reads TAQNHQSQTGQTNEPTKSPSHRQNNSNTL. The span at 482-504 shows a compositional bias: polar residues; the sequence is KSGSPATQHATLNQGLSSSSTGD. Residues 524-533 are compositionally biased toward basic and acidic residues; that stretch reads RYYESRKGQE. 2 stretches are compositionally biased toward polar residues: residues 535-555 and 586-596; these read IRPS…SSSY and ESPTSPVNLRQ. 2 stretches are compositionally biased toward basic and acidic residues: residues 832–841 and 871–885; these read EHKREVERKQ and FDER…KKAD. Polar residues-rich tracts occupy residues 897-907 and 956-980; these read PQESYTLTRIN and GGKQ…PQSS. Composition is skewed to basic and acidic residues over residues 1128-1140 and 1189-1198; these read EDER…DSFA and PENDLHKKEN. Composition is skewed to polar residues over residues 1199-1208 and 1257-1272; these read QPSSSYTGEM and NQAS…NQKS. Positions 1323–1596 constitute a Protein kinase domain; sequence IIRGQLIGKG…QTLLTRHPFC (274 aa). ATP-binding positions include 1329–1337 and Lys1352; that span reads IGKGTYGRV. The active-site Proton acceptor is Asp1453.

It belongs to the protein kinase superfamily. STE Ser/Thr protein kinase family. MAP kinase kinase subfamily.

The enzyme catalyses L-seryl-[protein] + ATP = O-phospho-L-seryl-[protein] + ADP + H(+). It catalyses the reaction L-threonyl-[protein] + ATP = O-phospho-L-threonyl-[protein] + ADP + H(+). Functionally, mitogen-activated kinase kinase kinase (MAPKKK), part of the cell wall integrity (CWI) signaling pathway composed by three protein kinases bck1, mkk2 and mpkA and responsible for the maintaining of cell-wall integrity balance. The CWI pathway also regulates the oxidative stress response, as well as the production of some secondary metabolites including pyomelanin. In Aspergillus fumigatus (strain CBS 144.89 / FGSC A1163 / CEA10) (Neosartorya fumigata), this protein is Mitogen-activated protein kinase kinae kinase bck1.